Here is a 180-residue protein sequence, read N- to C-terminus: Nucleoside-triphosphatase THEP1 (180 aa).

ATP is bound by residues 9–16 (GRPGIGKT) and 99–106 (VVIVDEVG).

Belongs to the THEP1 NTPase family.

The catalysed reaction is a ribonucleoside 5'-triphosphate + H2O = a ribonucleoside 5'-diphosphate + phosphate + H(+). Its function is as follows. Has nucleotide phosphatase activity towards ATP, GTP, CTP, TTP and UTP. May hydrolyze nucleoside diphosphates with lower efficiency. In Methanopyrus kandleri (strain AV19 / DSM 6324 / JCM 9639 / NBRC 100938), this protein is Nucleoside-triphosphatase THEP1.